Reading from the N-terminus, the 591-residue chain is UvrABC system protein C (591 aa).

A GIY-YIG domain is found at 14–91 (DQPGCYLMKD…IKKHDPKYNV (78 aa)). One can recognise a UVR domain in the interval 196–231 (KEVKVELEKKMHKAAEELNFERAKELRDTLGYMEAV).

The protein belongs to the UvrC family. In terms of assembly, interacts with UvrB in an incision complex.

It localises to the cytoplasm. Functionally, the UvrABC repair system catalyzes the recognition and processing of DNA lesions. UvrC both incises the 5' and 3' sides of the lesion. The N-terminal half is responsible for the 3' incision and the C-terminal half is responsible for the 5' incision. The protein is UvrABC system protein C of Halalkalibacterium halodurans (strain ATCC BAA-125 / DSM 18197 / FERM 7344 / JCM 9153 / C-125) (Bacillus halodurans).